Consider the following 29-residue polypeptide: Protein YldA (29 aa).

The chain crosses the membrane as a helical span at residues 5–25 (FYILIGFLIMAAIIVMAVLYL).

The protein localises to the cell inner membrane. This chain is Protein YldA, found in Escherichia coli (strain K12).